Consider the following 209-residue polypeptide: Aspartate kinase-like protein lolA1 (209 aa).

Over residues 1–11 (MLDESPMRKGD) the composition is skewed to basic and acidic residues. Positions 1 to 27 (MLDESPMRKGDSVSNDQSNPESNASVS) are disordered. Residues 12–27 (SVSNDQSNPESNASVS) are compositionally biased toward polar residues.

It belongs to the aspartokinase family.

The protein operates within alkaloid biosynthesis. Its function is as follows. Aspartokinase-like protein; part of the gene cluster that mediates the biosynthesis of loline alkaloids, potent insecticidal agents composed of a pyrrolizidine ring system and an uncommon ether bridge linking carbons 2 and 7. Lolines are structurally differentiated by the various modifications of the L-amino group and include norloline, loline, N-methylloline, N-acetylloline, N-acetylnorloline, and N-formylloline. The first committed step is the condensation of O-acetyl-L-homoserine (derived from L-aspartic acid) and L-proline, probably catalyzed by the gamma-type pyridoxal 5'-phosphate(PLP)-dependent enzyme lolC, to give the diamino diacid, NACPP. Ensuing cyclization, decarboxylation, and acetylation steps yield 1-exo-acetamidopyrrolizidine (AcAP). LolO is required for installation of the ether bridge upon the pathway intermediate, 1-exo-acetamidopyrrolizidine (AcAP). In sequential 2-oxoglutarate- and O(2)-consuming steps, lolO removes hydrogens from C2 and C7 of AcAP to form both carbon-oxygen bonds in N-acetylnorloline (NANL), the precursor to all other lolines. The enzymes lolD, lolE, lolF and lolT have also been proposed to be involved in the ether-bridge installation. Further processing of the exocyclic moiety of NANL by fungal N-acetamidase (LolN), methyltransferase (LolM), and cytochrome P450 (LolP) enzymes, with occasional involvement of a plant acetyltransferase, generates the other known lolines. LolN transforms NANL to norlonine which is monomethylated and dimethylated to respectively lonine and N-methyllonine (NML) by lolM. LolP catalyzes hydroxylation of the methyl group in N-methylloline (NML) and further oxygenation to N-formylloline (NFL). A plant acetyltransferase is responsible for the acetylation of loline to form N-acetylloline (NAL). LolA might interact with aspartate kinase to prevent feedback inhibition of its activity by these end products and thereby promote production of L-homoserine from L-aspartate. The chain is Aspartate kinase-like protein lolA1 from Epichloe uncinata (Endophyte fungus).